Here is a 178-residue protein sequence, read N- to C-terminus: ATP-dependent protease subunit HslV (178 aa).

Threonine 7 is a catalytic residue. Na(+) contacts are provided by glycine 162, cysteine 165, and threonine 168.

This sequence belongs to the peptidase T1B family. HslV subfamily. A double ring-shaped homohexamer of HslV is capped on each side by a ring-shaped HslU homohexamer. The assembly of the HslU/HslV complex is dependent on binding of ATP.

The protein resides in the cytoplasm. It catalyses the reaction ATP-dependent cleavage of peptide bonds with broad specificity.. Its activity is regulated as follows. Allosterically activated by HslU binding. In terms of biological role, protease subunit of a proteasome-like degradation complex believed to be a general protein degrading machinery. In Ralstonia nicotianae (strain ATCC BAA-1114 / GMI1000) (Ralstonia solanacearum), this protein is ATP-dependent protease subunit HslV.